The chain runs to 120 residues: Small ribosomal subunit protein uS13 (120 aa).

The disordered stretch occupies residues 92-120 (HRKGLPVRGQTTKNNARTRKGKKKTVGSK). Residues 107-120 (ARTRKGKKKTVGSK) show a composition bias toward basic residues.

This sequence belongs to the universal ribosomal protein uS13 family. Part of the 30S ribosomal subunit. Forms a loose heterodimer with protein S19. Forms two bridges to the 50S subunit in the 70S ribosome.

Functionally, located at the top of the head of the 30S subunit, it contacts several helices of the 16S rRNA. In the 70S ribosome it contacts the 23S rRNA (bridge B1a) and protein L5 of the 50S subunit (bridge B1b), connecting the 2 subunits; these bridges are implicated in subunit movement. Contacts the tRNAs in the A and P-sites. This is Small ribosomal subunit protein uS13 from Helicobacter hepaticus (strain ATCC 51449 / 3B1).